A 184-amino-acid chain; its full sequence is Der GTPase-activating protein YihI (184 aa).

Disordered regions lie at residues 1-106 and 159-184; these read MNRP…PTMS and LGDD…KDAL. The span at 8 to 32 shows a compositional bias: basic and acidic residues; that stretch reads VADKAEKSKVKRKTREELEREARER. The span at 159 to 169 shows a compositional bias: acidic residues; the sequence is LGDDDEEEQQE.

It belongs to the YihI family. As to quaternary structure, interacts with Der.

In terms of biological role, a GTPase-activating protein (GAP) that modifies Der/EngA GTPase function. May play a role in ribosome biogenesis. The polypeptide is Der GTPase-activating protein YihI (Pectobacterium atrosepticum (strain SCRI 1043 / ATCC BAA-672) (Erwinia carotovora subsp. atroseptica)).